A 107-amino-acid chain; its full sequence is N(4)-acetylcytidine amidohydrolase (107 aa).

An ASCH domain is found at 9-105 (TFFEFLTPLI…KLFVIEYELI (97 aa)). Lys-23 (proton acceptor) is an active-site residue. Thr-26 (nucleophile) is an active-site residue. Glu-76 (proton donor) is an active-site residue.

The protein belongs to the N(4)-acetylcytidine amidohydrolase family.

It carries out the reaction N(4)-acetylcytidine + H2O = cytidine + acetate + H(+). The catalysed reaction is N(4)-acetyl-2'-deoxycytidine + H2O = 2'-deoxycytidine + acetate + H(+). It catalyses the reaction N(4)-acetylcytosine + H2O = cytosine + acetate + H(+). Catalyzes the hydrolysis of N(4)-acetylcytidine (ac4C). This is N(4)-acetylcytidine amidohydrolase from Vibrio parahaemolyticus serotype O3:K6 (strain RIMD 2210633).